Reading from the N-terminus, the 213-residue chain is MNFTRIDLNTWNRREHFALYRQQIKCGFSLTTKLDITAFRTALAETDYKFYPVMIYLISRVVNQFPEFRMAMKDNALIYWDQTDPVFTVFHKETETFSALFCRYCPDISEFMAGYNAVMAEYQHNTALFPQGALPENHLNISSLPWVSFDGFNLNITGNDDYFAPVFTMAKFQQEDNRVLLPVSVQVHHAVCDGFHAARFINTLQMMCDNILK.

The Proton acceptor role is filled by His-189.

Belongs to the chloramphenicol acetyltransferase family. In terms of assembly, homotrimer.

The enzyme catalyses chloramphenicol + acetyl-CoA = chloramphenicol 3-acetate + CoA. This enzyme is an effector of chloramphenicol resistance in bacteria. This Haemophilus influenzae protein is Chloramphenicol acetyltransferase 2 (cat-IIH).